The following is an 889-amino-acid chain: Translation initiation factor IF-2 (889 aa).

Positions E115–I236 are enriched in basic and acidic residues. The disordered stretch occupies residues E115–M293. The span at G257–R270 shows a compositional bias: basic residues. Over residues G271–E280 the composition is skewed to basic and acidic residues. The 170-residue stretch at P389 to K558 folds into the tr-type G domain. The tract at residues G398–T405 is G1. GTP is bound at residue G398–T405. The G2 stretch occupies residues G423 to H427. A G3 region spans residues D444–G447. GTP contacts are provided by residues D444–H448 and N498–D501. The tract at residues N498–D501 is G4. Residues S534–K536 form a G5 region.

It belongs to the TRAFAC class translation factor GTPase superfamily. Classic translation factor GTPase family. IF-2 subfamily.

It localises to the cytoplasm. In terms of biological role, one of the essential components for the initiation of protein synthesis. Protects formylmethionyl-tRNA from spontaneous hydrolysis and promotes its binding to the 30S ribosomal subunits. Also involved in the hydrolysis of GTP during the formation of the 70S ribosomal complex. This Shewanella sp. (strain ANA-3) protein is Translation initiation factor IF-2.